The primary structure comprises 172 residues: Protein-export protein SecB (172 aa).

Residues 152–172 are disordered; the sequence is AQGAEGGNSGIVMPDGSQARH.

Belongs to the SecB family. Homotetramer, a dimer of dimers. One homotetramer interacts with 1 SecA dimer.

It localises to the cytoplasm. One of the proteins required for the normal export of preproteins out of the cell cytoplasm. It is a molecular chaperone that binds to a subset of precursor proteins, maintaining them in a translocation-competent state. It also specifically binds to its receptor SecA. In Cupriavidus taiwanensis (strain DSM 17343 / BCRC 17206 / CCUG 44338 / CIP 107171 / LMG 19424 / R1) (Ralstonia taiwanensis (strain LMG 19424)), this protein is Protein-export protein SecB.